Here is a 321-residue protein sequence, read N- to C-terminus: Mas-related G-protein coupled receptor member D (321 aa).

Over 1–33 (MNQTLNSSGTVESALNYSRGSTVHTAYLVLSSL) the chain is Extracellular. N-linked (GlcNAc...) asparagine glycosylation is found at N2, N6, and N16. Residues 34–54 (AMFTCLCGMAGNSMVIWLLGF) traverse the membrane as a helical segment. At 55-59 (RMHRN) the chain is on the cytoplasmic side. The chain crosses the membrane as a helical span at residues 60 to 80 (PFCIYILNLAAADLLFLFSMA). Residues 81 to 112 (STLSLETQPLVNTTDKVHELMKRLMYFAYTVG) lie on the Extracellular side of the membrane. N92 is a glycosylation site (N-linked (GlcNAc...) asparagine). The helical transmembrane segment at 113–133 (LSLLTAISTQRCLSVLFPIWF) threads the bilayer. Topologically, residues 134-142 (KCHRPRHLS) are cytoplasmic. A helical transmembrane segment spans residues 143–163 (AWVCGLLWTLCLLMNGLTSSF). Topologically, residues 164–184 (CSKFLKFNEDRCFRVDMVQAA) are extracellular. A helical membrane pass occupies residues 185-205 (LIMGVLTPVMTLSSLTLFVWV). The Cytoplasmic segment spans residues 206-218 (RRSSQQWRRQPTR). Residues 219-239 (LFVVVLASVLVFLICSLPLSI) form a helical membrane-spanning segment. Residues 240 to 257 (YWFVLYWLSLPPEMQVLC) are Extracellular-facing. The helical transmembrane segment at 258 to 280 (FSLSRLSSSVSSSANPVIYFLVG) threads the bilayer. The Cytoplasmic segment spans residues 281-321 (SRRSHRLPTRSLGTVLQQALREEPELEGGETPTVGTNEMGA). Positions 302–321 (EEPELEGGETPTVGTNEMGA) are disordered.

It belongs to the G-protein coupled receptor 1 family. Mas subfamily.

The protein localises to the cell membrane. Its function is as follows. May regulate nociceptor function and/or development, including the sensation or modulation of pain. Functions as a specific membrane receptor for beta-alanine. Beta-alanine at micromolar doses specifically evoked Ca(2+) influx in cells expressing the receptor. Beta-alanine decreases forskolin-stimulated cAMP production in cells expressing the receptor, suggesting that the receptor couples with G-protein G(q) and G(i). The sequence is that of Mas-related G-protein coupled receptor member D (MRGPRD) from Homo sapiens (Human).